Consider the following 8892-residue polypeptide: Nonribosomal peptide synthetase 32 (8892 aa).

Residues 12–85 enclose the Carrier 1 domain; the sequence is EPSKLVLGRV…QLAESIAQQN (74 aa). Serine 46 carries the O-(pantetheine 4'-phosphoryl)serine modification. The segment at 88–112 is disordered; that stretch reads AGNGVNGHANGNGMNGNGLHNEATI. Residues 93 to 108 show a composition bias toward low complexity; the sequence is NGHANGNGMNGNGLHN. Residues 567-956 are condensation 1; it reads PTSANVPRRV…EGVDLSVRDF (390 aa). The segment at 989–1386 is adenylation 1; that stretch reads KMAEQPEALA…GRIDSQIKIR (398 aa). One can recognise a Carrier 2 domain in the interval 1523–1599; sequence ISATAVEREL…ELAAEVQATQ (77 aa). Serine 1560 carries the post-translational modification O-(pantetheine 4'-phosphoryl)serine. Residues 1609-2039 form an epimerization 1 region; it reads GAIALSPIQQ…YGQTVKSLVN (431 aa). The interval 2083–2518 is condensation 2; sequence EDILPCSPIQ…LLLPAEEAKL (436 aa). The segment at 2543 to 2934 is adenylation 2; the sequence is SQPEALAVSA…GRRDTQVKIR (392 aa). The Carrier 3 domain occupies 3061 to 3137; sequence SSATPIEREL…ELAANSQTGR (77 aa). Residue serine 3098 is modified to O-(pantetheine 4'-phosphoryl)serine. The segment at 3153–3590 is epimerization 2; sequence LSPIQQMFFD…GDTVKTLVEE (438 aa). Positions 3634–4061 are condensation 3; that stretch reads EDILPCSAIQ…NVDRPLRELT (428 aa). The tract at residues 4098 to 4488 is adenylation 3; the sequence is TLPEALAISS…GRIDSQIKIR (391 aa). One can recognise a Carrier 4 domain in the interval 4627 to 4703; the sequence is APTTDLERKL…DLSRVVEEKC (77 aa). At serine 4664 the chain carries O-(pantetheine 4'-phosphoryl)serine. Residues 4760 to 5181 form a condensation 4 region; the sequence is EDVYPCSPMQ…LLTDEDCDQL (422 aa). Residues 5205–5605 are adenylation 4; the sequence is TSYPTAPAIS…GRRDTQVKIR (401 aa). In terms of domain architecture, Carrier 5 spans 5745–5821; it reads MPTTPMEQKL…DLAEAMEEKG (77 aa). O-(pantetheine 4'-phosphoryl)serine is present on serine 5782. Positions 5868–6285 are condensation 5; the sequence is EDVYPCSPLQ…LLSPGQMAQI (418 aa). Positions 6307–6700 are adenylation 5; sequence QMTTRPAATA…GRIDTQIKIR (394 aa). Residues 6834-6911 form the Carrier 6 domain; it reads ELTTTIERQL…ELATQTQTTE (78 aa). Serine 6872 is modified (O-(pantetheine 4'-phosphoryl)serine). The segment at 6923 to 7360 is epimerization 3; sequence NFQLSPIQQM…SYSCAIESLV (438 aa). Residues 7403–7834 are condensation 6; it reads VQDILPCSPI…LLPAGDANQI (432 aa). Residues 7855-8253 are adenylation 6; sequence QQMAAHPTAQ…LDRIGTQVKI (399 aa). The 77-residue stretch at 8380–8456 folds into the Carrier 7 domain; that stretch reads APVGRNEEIL…AMAARVTADI (77 aa). O-(pantetheine 4'-phosphoryl)serine is present on serine 8417. The tract at residues 8490 to 8878 is condensation 7; that stretch reads HFAFDATGPC…EIIEDSGCNV (389 aa).

Belongs to the NRP synthetase family.

It functions in the pathway secondary metabolite biosynthesis. Nonribosomal peptide synthetase; part of the gene cluster that mediates the biosynthesis of the lipopeptides W493 A and B. W493 A and B consist of six amino acid residues D-allo-thr, L-Ala, D-Ala, L-Gln, D-Tyr, and L-Val/L-Ile linked to a 3-hydroxy-4-methyltetradecanoic acid polyketide chain. The biosynthesis starts with formation of the linear polyketide chain by the highly reducing polyketide synthase PKS40. The gene cluster contains a putative acyl-CoA ligase (FPSE_09184) for formation of a CoA thioester polyketide. The thiol bond could be hydrolyzed by the putative thioesterase (FPSE_09186) and then accepted by the first T domain in module 1 of NRPS32. The second T domain is responsible for accepting a threonine, which is adenylated by the A domain and epimerized to the D-allo-threonine formed by the E domain. The five successive modules incorporate Ala, Ala, Gln, Tyr, and Val/Ile into the final product, which is released by cyclization. The protein is Nonribosomal peptide synthetase 32 of Fusarium pseudograminearum (strain CS3096) (Wheat and barley crown-rot fungus).